The chain runs to 396 residues: MLRRLLERPCTLALLVGSQLAVMMYLSLGGFRSLSALFGREQEPAFDYSHPHDVYSNLSHMPGAPVAPGGLPAPQGLPYCPKRSPLLVGPISVSFSPVPSLAEIVERNPRVEPGGRYRPARCEPRSRTAIIVPHRAREHHLRLLLYHLHPFLQRQQLAYGIYVIHQAGNGTFNRAKLLNVGVREALRDEEWDCLFLHDVDLLPENDHNLYVCDPRGPRHVAVAMNKFGYSLPYPQYFGGVSALTPDQYLKMNGFPNEYWGWGGEDDDIATRVRLAGMKISRPPTSVGHYKMVKHRGDKGNEENPHRFDLLVRTQNSWTQDGMNSLTYQLLSRELGPLYTNITADIGTDPRGPRTSSGPHYPPGSSQAFRQEMLQRRPPARPGPLPTANHTAPHGSH.

Topologically, residues 1 to 10 (MLRRLLERPC) are cytoplasmic. The helical; Signal-anchor for type II membrane protein transmembrane segment at 11 to 31 (TLALLVGSQLAVMMYLSLGGF) threads the bilayer. Residues 32-396 (RSLSALFGRE…ANHTAPHGSH (365 aa)) lie on the Lumenal side of the membrane. A glycan (N-linked (GlcNAc...) asparagine) is linked at asparagine 57. Cysteine 80 and cysteine 122 are joined by a disulfide. 133–137 (PHRAR) is a UDP-alpha-D-galactose binding site. An N-linked (GlcNAc...) asparagine glycan is attached at asparagine 169. Residues 172–174 (FNR), 199–200 (VD), tyrosine 229, and tryptophan 261 contribute to the UDP-alpha-D-galactose site. Cysteine 193 and cysteine 212 are joined by a disulfide. Mn(2+) is bound at residue aspartate 200. 263–266 (GEDD) contributes to the N-acetyl-D-glucosamine binding site. Histidine 294 lines the Mn(2+) pocket. Position 294–296 (294–296 (HRG)) interacts with UDP-alpha-D-galactose. Position 306 (arginine 306) interacts with N-acetyl-D-glucosamine. The N-linked (GlcNAc...) asparagine glycan is linked to asparagine 340. Residues 341 to 396 (ITADIGTDPRGPRTSSGPHYPPGSSQAFRQEMLQRRPPARPGPLPTANHTAPHGSH) are disordered. The span at 353-368 (RTSSGPHYPPGSSQAF) shows a compositional bias: polar residues. N-linked (GlcNAc...) asparagine glycosylation is present at asparagine 388.

This sequence belongs to the glycosyltransferase 7 family. The cofactor is Mn(2+).

It localises to the golgi apparatus. Its subcellular location is the golgi stack membrane. The enzyme catalyses an N-acetyl-beta-D-glucosaminyl derivative + UDP-alpha-D-galactose = a beta-D-galactosyl-(1-&gt;4)-N-acetyl-beta-D-glucosaminyl derivative + UDP + H(+). It catalyses the reaction N-acetyl-D-glucosamine + UDP-alpha-D-galactose = beta-D-galactosyl-(1-&gt;4)-N-acetyl-D-glucosamine + UDP + H(+). It carries out the reaction a beta-D-GlcNAc-(1-&gt;3)-beta-D-Gal-(1-&gt;4)-beta-D-Glc-(1&lt;-&gt;1)-Cer(d18:1(4E)) + UDP-alpha-D-galactose = a neolactoside nLc4Cer(d18:1(4E)) + UDP + H(+). The catalysed reaction is a beta-D-glucosylceramide + UDP-alpha-D-galactose = a beta-D-galactosyl-(1-&gt;4)-beta-D-glucosyl-(1&lt;-&gt;1)-ceramide + UDP + H(+). The enzyme catalyses a neolactoside IV(3)-beta-GlcNAc-nLc4Cer + UDP-alpha-D-galactose = a neolactoside nLc6Cer + UDP + H(+). Its pathway is protein modification; protein glycosylation. Functionally, responsible for the synthesis of complex-type N-linked oligosaccharides in many glycoproteins as well as the carbohydrate moieties of glycolipids. The chain is Beta-1,4-galactosyltransferase 3 (B4GALT3) from Bos taurus (Bovine).